Consider the following 595-residue polypeptide: S-(+)-linalool synthase, chloroplastic (595 aa).

Residues 1–46 (MVCHVFSSFSSSLIRVLEAPLLLPAASASSSSSSSPASRSGGRRRR) constitute a chloroplast transit peptide. A compositionally biased stretch (low complexity) spans 27-40 (SASSSSSSSPASRS). The tract at residues 27 to 54 (SASSSSSSSPASRSGGRRRRAAHVRPSP) is disordered. (2E)-geranyl diphosphate contacts are provided by arginine 309, aspartate 346, aspartate 350, arginine 487, and aspartate 490. Mg(2+) contacts are provided by aspartate 346 and aspartate 350. The short motif at 346–350 (DDIFD) is the DDXXD motif element. Positions 490, 494, and 498 each coordinate Mg(2+).

Belongs to the terpene synthase family. Tpsb subfamily. It depends on Mg(2+) as a cofactor. Requires Mn(2+) as cofactor.

The protein resides in the plastid. The protein localises to the chloroplast. It catalyses the reaction (2E)-geranyl diphosphate + H2O = (S)-linalool + diphosphate. It participates in secondary metabolite biosynthesis; terpenoid biosynthesis. Its function is as follows. Involved in monoterpene (C10) biosynthesis. The major product is S-(+)-linalool. Linalool production is induced by jasmonate in response to pathogen attack, it possesses antibacterial activity and is important for resistance to the bacterial blight pathogen Xanthomonas oryzae pv. oryzae (Xoo). Plants over-expressing linalool synthase display enhanced resistance to Xoo. The chain is S-(+)-linalool synthase, chloroplastic from Oryza sativa subsp. japonica (Rice).